The following is a 248-amino-acid chain: 2,3-bisphosphoglycerate-dependent phosphoglycerate mutase (248 aa).

Substrate-binding positions include 8-15, 21-22, R60, 87-90, K98, 114-115, and 183-184; these read RHGESVWN, TG, ERHY, RR, and GN. H9 serves as the catalytic Tele-phosphohistidine intermediate. The active-site Proton donor/acceptor is the E87.

Belongs to the phosphoglycerate mutase family. BPG-dependent PGAM subfamily.

It catalyses the reaction (2R)-2-phosphoglycerate = (2R)-3-phosphoglycerate. Its pathway is carbohydrate degradation; glycolysis; pyruvate from D-glyceraldehyde 3-phosphate: step 3/5. Catalyzes the interconversion of 2-phosphoglycerate and 3-phosphoglycerate. This is 2,3-bisphosphoglycerate-dependent phosphoglycerate mutase from Brachyspira hyodysenteriae (strain ATCC 49526 / WA1).